The following is a 20-amino-acid chain: Fibrinogen beta chain (20 aa).

The interval 1-20 is disordered; sequence ATDYEDEEFPGAVPPSVGAR. The O-linked (GalNAc...) threonine glycan is linked to T2. Sulfotyrosine is present on Y4.

As to quaternary structure, heterohexamer; disulfide linked. Contains 2 sets of 3 non-identical chains (alpha, beta and gamma). The 2 heterotrimers are in head to head conformation with the N-termini in a small central domain. Post-translationally, conversion of fibrinogen to fibrin is triggered by thrombin, which cleaves fibrinopeptides A and B from alpha and beta chains, and thus exposes the N-terminal polymerization sites responsible for the formation of the soft clot.

Its subcellular location is the secreted. Functionally, cleaved by the protease thrombin to yield monomers which, together with fibrinogen alpha (FGA) and fibrinogen gamma (FGG), polymerize to form an insoluble fibrin matrix. Fibrin has a major function in hemostasis as one of the primary components of blood clots. In addition, functions during the early stages of wound repair to stabilize the lesion and guide cell migration during re-epithelialization. Was originally thought to be essential for platelet aggregation, based on in vitro studies using anticoagulated blood. However subsequent studies have shown that it is not absolutely required for thrombus formation in vivo. Enhances expression of SELP in activated platelets. Maternal fibrinogen is essential for successful pregnancy. Fibrin deposition is also associated with infection, where it protects against IFNG-mediated hemorrhage. May also facilitate the antibacterial immune response via both innate and T-cell mediated pathways. The polypeptide is Fibrinogen beta chain (FGB) (Elephas maximus (Indian elephant)).